We begin with the raw amino-acid sequence, 318 residues long: Ankyrin repeat domain-containing protein 1 (318 aa).

Residues 37 to 77 adopt a coiled-coil conformation; it reads ALEKQEDLKTTSKSLIELEEEKQIKEKQLKSELLKKKLEER. ANK repeat units follow at residues 118–147, 151–180, 184–213, 217–246, 250–279, and 283–314; these read VDQT…DPNT, YKRT…NIEF, LEST…AINA, LLST…DLHA, EGDT…DLNI, and AGKT…KNSH.

The protein resides in the nucleus. May act as a nuclear transcription factor that negatively regulates the expression of cardiac genes. This Xenopus tropicalis (Western clawed frog) protein is Ankyrin repeat domain-containing protein 1 (ankrd1).